A 521-amino-acid chain; its full sequence is Ankyrin repeat and death domain-containing protein 1B (521 aa).

ANK repeat units lie at residues 60–89 (AIER…NINA), 93–122 (MNRT…RVDV), 126–155 (HGLT…DQRA), 159–190 (EGMN…DLNQ), 194–223 (RGRK…HTSE), 227–256 (DGNT…EVNE), 260–289 (LNVS…DLQQ), 293–322 (SKEP…DVDV), 326–355 (RRQT…NLKI), and 359–388 (QGKT…YYAW). A Death domain is found at 420–508 (TLLWNLAYRQ…ELAEKIRQFK (89 aa)).

This Mus musculus (Mouse) protein is Ankyrin repeat and death domain-containing protein 1B (Ankdd1b).